Consider the following 309-residue polypeptide: Protein FdhE homolog (309 aa).

It belongs to the FdhE family.

The protein resides in the cytoplasm. Necessary for formate dehydrogenase activity. The polypeptide is Protein FdhE homolog (Cronobacter sakazakii (strain ATCC BAA-894) (Enterobacter sakazakii)).